Reading from the N-terminus, the 428-residue chain is MKQDRSSALFQQARQSIPGGVNSPVRAFKSVGSDPLFIQSASGCTITDVDGNTFIDYVGSWGPMIVGHCHPQVVEAVRQAAGSGASFGAPTEREITLANMVIDAVPSIEMVRMVSSGTEATMSAIRLARGYTGRDNIIKFSGCYHGHADSLLVRAGSGAATFGIPDSPGVPADFAKHTLTAEFNSLDSVRQLVADNPESIACIIVEPVAGNMGTVPPRDGFLEGLRQICSNEGIVLIFDEVMTGFRVAYGGAQERYGVTPDMTTLGKIIGGGLPVGAFGGRREIMEMLSPSGSVYQAGTLSGNPLAMSAGIATLSLLKQPGFYESLEEKSRHLAEGITDAARLAGYPIQTTRVGSMFCAFFSGQEVYDWAGASGCDTAAFAAYFKAMLNEGIYLAPSQFETAFVSAAHTDADIEATIRAAARCFKLIS.

N6-(pyridoxal phosphate)lysine is present on Lys-267.

This sequence belongs to the class-III pyridoxal-phosphate-dependent aminotransferase family. HemL subfamily. Homodimer. Pyridoxal 5'-phosphate serves as cofactor.

Its subcellular location is the cytoplasm. The catalysed reaction is (S)-4-amino-5-oxopentanoate = 5-aminolevulinate. Its pathway is porphyrin-containing compound metabolism; protoporphyrin-IX biosynthesis; 5-aminolevulinate from L-glutamyl-tRNA(Glu): step 2/2. In Pelobacter propionicus (strain DSM 2379 / NBRC 103807 / OttBd1), this protein is Glutamate-1-semialdehyde 2,1-aminomutase.